We begin with the raw amino-acid sequence, 88 residues long: MGDVAAKIKVMPNSPDIDLDDLQDRLEESLPQGAKIRGFQRDDVAFGLVALLPTVIVPDGAGGTEAVEEAFNEVDGVESVAVENVGRL.

The protein belongs to the EF-1-beta/EF-1-delta family.

Promotes the exchange of GDP for GTP in EF-1-alpha/GDP, thus allowing the regeneration of EF-1-alpha/GTP that could then be used to form the ternary complex EF-1-alpha/GTP/AAtRNA. The polypeptide is Elongation factor 1-beta (Halorubrum lacusprofundi (strain ATCC 49239 / DSM 5036 / JCM 8891 / ACAM 34)).